The primary structure comprises 637 residues: Transcription factor GLABRA 3 (637 aa).

The region spanning 437-486 is the bHLH domain; that stretch reads DETGNHAVLEKKRREKLNERFMTLRKIIPSINKIDKVSILDDTIEYLQEL. Residues 497–521 are disordered; sequence RESTDTETRGTMTMKRKKPCDAGER. The binding with MYB0/GL1 and MYB23 stretch occupies residues 541-637; that stretch reads NVGEAEPADT…EALQRVAWIC (97 aa).

As to quaternary structure, efficient DNA binding requires dimerization with another bHLH protein. Homodimer and heterodimer with BHLH2. Interacts directly with TTG1 and MYB0/GL1 to form a complex. Its interaction with TRY prevents MYB0/GL1 binding. Interacts with MYB75/PAP1, MYB90/PAP2, TT2, CPC, MYB23 and MYB66/WER. Interacts with MYB82. As to expression, mostly expressed in roots and flowers. Also present in stems and leaves, and, to a lower extent, in hypocotyls. Expressed in epidermal root hair cells (trichoblasts) and moves to root hairless cells (atrichoblasts) by a cell-to-cell movement through plasmodesmata (at protein level).

The protein resides in the nucleus. In terms of biological role, transcription activator, when associated with MYB75/PAP1, MYB90/PAP2 or TT2. Involved in epidermal cell fate specification. Negatively regulates stomata formation, but, in association with TTG1 and MYB0/GL1, promotes trichome formation, branching and endoreplication. Also regulates trichome cell wall maturation. Together with MYB66/WER, promotes the formation of non-hair cells in root epidermis cells in the N position. Whereas together with CPC, promotes the formation of hair cells in root epidermis cells in the H position by inhibiting non-hair cell formation. Also seems to play a role in the activation of anthocyanin biosynthesis, probably together with MYB75/PAP1. Activates the transcription of GL2. The chain is Transcription factor GLABRA 3 (GL3) from Arabidopsis thaliana (Mouse-ear cress).